The following is a 53-amino-acid chain: Sec-independent protein translocase protein TatA (53 aa).

A helical membrane pass occupies residues 1-21 (MGMSFSHLLIVLLIIFVLFGA).

It belongs to the TatA/E family. As to quaternary structure, the Tat system comprises two distinct complexes: a TatABC complex, containing multiple copies of TatA, TatB and TatC subunits, and a separate TatA complex, containing only TatA subunits. Substrates initially bind to the TatABC complex, which probably triggers association of the separate TatA complex to form the active translocon.

It localises to the cell inner membrane. Its function is as follows. Part of the twin-arginine translocation (Tat) system that transports large folded proteins containing a characteristic twin-arginine motif in their signal peptide across membranes. TatA could form the protein-conducting channel of the Tat system. The polypeptide is Sec-independent protein translocase protein TatA (Rickettsia rickettsii (strain Iowa)).